The sequence spans 121 residues: Small ribosomal subunit protein uS13 (121 aa).

The interval 97–121 (VRGQRTRTNARTRRGARKTVAGKKK) is disordered. The segment covering 100–121 (QRTRTNARTRRGARKTVAGKKK) has biased composition (basic residues).

Belongs to the universal ribosomal protein uS13 family. Part of the 30S ribosomal subunit. Forms a loose heterodimer with protein S19. Forms two bridges to the 50S subunit in the 70S ribosome.

In terms of biological role, located at the top of the head of the 30S subunit, it contacts several helices of the 16S rRNA. In the 70S ribosome it contacts the 23S rRNA (bridge B1a) and protein L5 of the 50S subunit (bridge B1b), connecting the 2 subunits; these bridges are implicated in subunit movement. Contacts the tRNAs in the A and P-sites. The sequence is that of Small ribosomal subunit protein uS13 from Prochlorococcus marinus (strain MIT 9313).